Here is a 350-residue protein sequence, read N- to C-terminus: Anthranilate phosphoribosyltransferase (350 aa).

5-phospho-alpha-D-ribose 1-diphosphate is bound by residues Gly82, 85-86 (GD), Ser90, 92-95 (NVST), 110-118 (KHGNRAVTG), and Gly122. Gly82 serves as a coordination point for anthranilate. Ser94 provides a ligand contact to Mg(2+). Asn113 lines the anthranilate pocket. Arg168 is a binding site for anthranilate. Residues Asp232 and Glu233 each contribute to the Mg(2+) site.

Belongs to the anthranilate phosphoribosyltransferase family. As to quaternary structure, homodimer. Mg(2+) is required as a cofactor.

It catalyses the reaction N-(5-phospho-beta-D-ribosyl)anthranilate + diphosphate = 5-phospho-alpha-D-ribose 1-diphosphate + anthranilate. It participates in amino-acid biosynthesis; L-tryptophan biosynthesis; L-tryptophan from chorismate: step 2/5. In terms of biological role, catalyzes the transfer of the phosphoribosyl group of 5-phosphorylribose-1-pyrophosphate (PRPP) to anthranilate to yield N-(5'-phosphoribosyl)-anthranilate (PRA). In Methanothermobacter marburgensis (strain ATCC BAA-927 / DSM 2133 / JCM 14651 / NBRC 100331 / OCM 82 / Marburg) (Methanobacterium thermoautotrophicum), this protein is Anthranilate phosphoribosyltransferase.